We begin with the raw amino-acid sequence, 352 residues long: Pejvakin (352 aa).

This sequence belongs to the gasdermin family. In terms of assembly, interacts with MAP1LC3B; interaction is direct. Interacts with IQGAP1. Interacts with ROCK2. Interacts with TRIOBP.

Its subcellular location is the peroxisome membrane. The protein localises to the cell projection. It localises to the cilium. Its function is as follows. Peroxisome-associated protein required to protect auditory hair cells against noise-induced damage. Acts by regulating noise-induced peroxisome proliferation in auditory hair cells and neurons, and promoting autophagic degradation of damaged peroxisomes (pexophagy). Noise overexposure increases reactive oxygen species (ROS) levels, causing oxidative damage to auditory hair cells and resulting in hearing loss. PJVK acts as a ROS sensor that recruits the autophagy machinery to trigger pexophagy of peroxisomes damaged by oxidative stress. In addition to pexophagy, also required to promote peroxisome proliferation in response to sound overstimulation. This Homo sapiens (Human) protein is Pejvakin.